A 296-amino-acid polypeptide reads, in one-letter code: MLLGSHVSMSGKKMLEGSAIEAHEYGETTFMIYTGAPQNTRRKSIEDLNITKGHEVMEKYGLSNIVVHAPYIINIANTTKPETFNLGVDFLQQEIERTQAIGAKDIVLHPGAHVGAGVDAGINKIIEGLNEVLTNDNNVRIALETMAGKGTEIGRSFEELARIIDGVHNNERLSVCFDTCHTHDAGYNVKEDFDGVLNEFDKIIGVDRIKVVHVNDSKNDRGAQKDRHENIGFGYIGFDALNYIVHHDSFKDIPKILETPYVGEDKKNKKPPYKLEIEMLKQQHFDPELKNKVMQQ.

Positions 68, 109, 144, 178, 181, 213, 226, 228, and 258 each coordinate Zn(2+).

Belongs to the AP endonuclease 2 family. Zn(2+) is required as a cofactor.

The catalysed reaction is Endonucleolytic cleavage to 5'-phosphooligonucleotide end-products.. Its function is as follows. Endonuclease IV plays a role in DNA repair. It cleaves phosphodiester bonds at apurinic or apyrimidinic (AP) sites, generating a 3'-hydroxyl group and a 5'-terminal sugar phosphate. The protein is Probable endonuclease 4 of Staphylococcus aureus (strain MRSA252).